A 367-amino-acid chain; its full sequence is Heme A synthase (367 aa).

8 helical membrane passes run 26–46 (IRGW…VGGA), 111–131 (LLAR…WVTG), 139–159 (LPLL…WWMV), 174–194 (LATH…IYRG), 212–232 (AAVI…VAGL), 272–292 (FVHR…MIAA), 305–325 (SVLL…TLLL), and 327–347 (VPIG…GFAI). H274 contacts heme. H335 serves as a coordination point for heme.

Belongs to the COX15/CtaA family. Type 2 subfamily. As to quaternary structure, interacts with CtaB. Requires heme b as cofactor.

The protein localises to the cell membrane. The catalysed reaction is Fe(II)-heme o + 2 A + H2O = Fe(II)-heme a + 2 AH2. The protein operates within porphyrin-containing compound metabolism; heme A biosynthesis; heme A from heme O: step 1/1. In terms of biological role, catalyzes the conversion of heme O to heme A by two successive hydroxylations of the methyl group at C8. The first hydroxylation forms heme I, the second hydroxylation results in an unstable dihydroxymethyl group, which spontaneously dehydrates, resulting in the formyl group of heme A. In Sinorhizobium medicae (strain WSM419) (Ensifer medicae), this protein is Heme A synthase.